Reading from the N-terminus, the 318-residue chain is Ankyrin repeat domain-containing protein 1 (318 aa).

Positions 37-77 (ALEKQEDLKTTSKSLIELEEEKQSKEKQLKSELLKKKLEER) form a coiled coil. 5 ANK repeats span residues 151 to 180 (YKRTALHRACSEGHTAIVEKLIEAGANIEF), 184 to 213 (LESTALHWTCRGGSVETLKLLLNKGAAINA), 217 to 246 (LLSTPLHVAVRTGYYECGEHLIACEADLNA), 250 to 279 (EGDTPMHDGVRLNRYKMIRLLILYGVNLNI), and 283 to 314 (AGKTPMELVMQWQNGAKEIFNGLQNKSYKNSH).

The protein localises to the nucleus. Functionally, may act as a nuclear transcription factor that negatively regulates the expression of cardiac genes. This chain is Ankyrin repeat domain-containing protein 1 (ankrd1), found in Xenopus laevis (African clawed frog).